The following is a 505-amino-acid chain: Apolipoprotein N-acyltransferase (505 aa).

6 helical membrane-spanning segments follow: residues 26–46 (FAPYQLWPIAILSPAILLILL), 66–86 (FATGVSWVYVSISGFGGMPLI), 89–109 (LFLMGMLIAYLAVYSGLFAWL), 129–149 (LWLITDWLRGWVMTGFPWLWL), 161–181 (FAPIGGVELLTLFVLISAGAL), and 186–206 (IHKQWLMIIIPVVLMSAGFGI). Residues 225–471 (IQGNVDQNLK…TAVLRAELTP (247 aa)) enclose the CN hydrolase domain. Residue Glu-264 is the Proton acceptor of the active site. Lys-330 is an active-site residue. The Nucleophile role is filled by Cys-382. Residues 481 to 501 (FGTWPLYFWVALSLMLAWWLP) form a helical membrane-spanning segment.

It belongs to the CN hydrolase family. Apolipoprotein N-acyltransferase subfamily.

The protein localises to the cell inner membrane. It catalyses the reaction N-terminal S-1,2-diacyl-sn-glyceryl-L-cysteinyl-[lipoprotein] + a glycerophospholipid = N-acyl-S-1,2-diacyl-sn-glyceryl-L-cysteinyl-[lipoprotein] + a 2-acyl-sn-glycero-3-phospholipid + H(+). It participates in protein modification; lipoprotein biosynthesis (N-acyl transfer). Catalyzes the phospholipid dependent N-acylation of the N-terminal cysteine of apolipoprotein, the last step in lipoprotein maturation. The sequence is that of Apolipoprotein N-acyltransferase from Vibrio parahaemolyticus serotype O3:K6 (strain RIMD 2210633).